The chain runs to 335 residues: Phosphate acyltransferase (335 aa).

This sequence belongs to the PlsX family. In terms of assembly, homodimer. Probably interacts with PlsY.

The protein localises to the cytoplasm. It carries out the reaction a fatty acyl-[ACP] + phosphate = an acyl phosphate + holo-[ACP]. It functions in the pathway lipid metabolism; phospholipid metabolism. Catalyzes the reversible formation of acyl-phosphate (acyl-PO(4)) from acyl-[acyl-carrier-protein] (acyl-ACP). This enzyme utilizes acyl-ACP as fatty acyl donor, but not acyl-CoA. This chain is Phosphate acyltransferase, found in Streptococcus pyogenes serotype M18 (strain MGAS8232).